A 447-amino-acid polypeptide reads, in one-letter code: GTPase Der (447 aa).

EngA-type G domains lie at 3–167 (PVIA…ALPE) and 180–353 (IRLA…KSAN). Residues 9-16 (GRPNVGKS), 56-60 (DTGGF), 119-122 (NKAE), 186-193 (GRPNVGKS), 233-237 (DTAGL), and 298-301 (NKWD) contribute to the GTP site. In terms of domain architecture, KH-like spans 354-438 (RKMPTPVLTR…PLRIEMKTSS (85 aa)).

Belongs to the TRAFAC class TrmE-Era-EngA-EngB-Septin-like GTPase superfamily. EngA (Der) GTPase family. In terms of assembly, associates with the 50S ribosomal subunit.

GTPase that plays an essential role in the late steps of ribosome biogenesis. This is GTPase Der from Acidovorax sp. (strain JS42).